Consider the following 289-residue polypeptide: Homoserine kinase (289 aa).

79–89 contributes to the ATP binding site; it reads PLARGLGSSSS.

The protein belongs to the GHMP kinase family. Homoserine kinase subfamily.

The protein localises to the cytoplasm. The enzyme catalyses L-homoserine + ATP = O-phospho-L-homoserine + ADP + H(+). Its pathway is amino-acid biosynthesis; L-threonine biosynthesis; L-threonine from L-aspartate: step 4/5. In terms of biological role, catalyzes the ATP-dependent phosphorylation of L-homoserine to L-homoserine phosphate. The polypeptide is Homoserine kinase (Streptococcus pneumoniae (strain Taiwan19F-14)).